The sequence spans 483 residues: Glycogen synthase (483 aa).

Lys-18 lines the ADP-alpha-D-glucose pocket.

It belongs to the glycosyltransferase 1 family. Bacterial/plant glycogen synthase subfamily.

It catalyses the reaction [(1-&gt;4)-alpha-D-glucosyl](n) + ADP-alpha-D-glucose = [(1-&gt;4)-alpha-D-glucosyl](n+1) + ADP + H(+). Its pathway is glycan biosynthesis; glycogen biosynthesis. In terms of biological role, synthesizes alpha-1,4-glucan chains using ADP-glucose. The chain is Glycogen synthase from Rhodopseudomonas palustris (strain ATCC BAA-98 / CGA009).